A 267-amino-acid chain; its full sequence is 3-methyl-2-oxobutanoate hydroxymethyltransferase (267 aa).

Positions 46 and 85 each coordinate Mg(2+). 3-methyl-2-oxobutanoate is bound by residues 46 to 47 (DS), Asp85, and Lys115. Position 117 (Glu117) interacts with Mg(2+). The Proton acceptor role is filled by Glu184.

This sequence belongs to the PanB family. Homodecamer; pentamer of dimers. Mg(2+) is required as a cofactor.

It localises to the cytoplasm. The catalysed reaction is 3-methyl-2-oxobutanoate + (6R)-5,10-methylene-5,6,7,8-tetrahydrofolate + H2O = 2-dehydropantoate + (6S)-5,6,7,8-tetrahydrofolate. Its pathway is cofactor biosynthesis; (R)-pantothenate biosynthesis; (R)-pantoate from 3-methyl-2-oxobutanoate: step 1/2. Functionally, catalyzes the reversible reaction in which hydroxymethyl group from 5,10-methylenetetrahydrofolate is transferred onto alpha-ketoisovalerate to form ketopantoate. The chain is 3-methyl-2-oxobutanoate hydroxymethyltransferase from Geobacter sulfurreducens (strain ATCC 51573 / DSM 12127 / PCA).